The sequence spans 316 residues: Lipoyl synthase (316 aa).

[4Fe-4S] cluster-binding residues include cysteine 60, cysteine 65, cysteine 71, cysteine 86, cysteine 90, cysteine 93, and serine 297. The Radical SAM core domain occupies 72–286; it reads WEDREATFLI…KDEADEVGFT (215 aa).

Belongs to the radical SAM superfamily. Lipoyl synthase family. It depends on [4Fe-4S] cluster as a cofactor.

It localises to the cytoplasm. It catalyses the reaction [[Fe-S] cluster scaffold protein carrying a second [4Fe-4S](2+) cluster] + N(6)-octanoyl-L-lysyl-[protein] + 2 oxidized [2Fe-2S]-[ferredoxin] + 2 S-adenosyl-L-methionine + 4 H(+) = [[Fe-S] cluster scaffold protein] + N(6)-[(R)-dihydrolipoyl]-L-lysyl-[protein] + 4 Fe(3+) + 2 hydrogen sulfide + 2 5'-deoxyadenosine + 2 L-methionine + 2 reduced [2Fe-2S]-[ferredoxin]. Its pathway is protein modification; protein lipoylation via endogenous pathway; protein N(6)-(lipoyl)lysine from octanoyl-[acyl-carrier-protein]: step 2/2. Functionally, catalyzes the radical-mediated insertion of two sulfur atoms into the C-6 and C-8 positions of the octanoyl moiety bound to the lipoyl domains of lipoate-dependent enzymes, thereby converting the octanoylated domains into lipoylated derivatives. The polypeptide is Lipoyl synthase (Nocardioides sp. (strain ATCC BAA-499 / JS614)).